Here is a 210-residue protein sequence, read N- to C-terminus: CKLF-like MARVEL transmembrane domain-containing protein 2B (210 aa).

4 helical membrane-spanning segments follow: residues 35–55 (FWAQ…IAAM), 65–85 (PIVI…FFLY), 103–123 (LMND…ALEA), and 127–147 (LPVP…ISII). Residues 35 to 157 (FWAQGHAECK…DLCLQRRQFK (123 aa)) form the MARVEL domain.

It belongs to the chemokine-like factor family.

It is found in the membrane. In Mus musculus (Mouse), this protein is CKLF-like MARVEL transmembrane domain-containing protein 2B (Cmtm2b).